Consider the following 429-residue polypeptide: tRNA-2-methylthio-N(6)-dimethylallyladenosine synthase (429 aa).

The MTTase N-terminal domain maps to 1–110 (MKFFIKTYGC…IPEAVELSIK (110 aa)). Residues cysteine 10, cysteine 46, cysteine 75, cysteine 146, cysteine 150, and cysteine 153 each contribute to the [4Fe-4S] cluster site. The region spanning 132–364 (RNSKHHAWIT…NLQKEINKML (233 aa)) is the Radical SAM core domain. In terms of domain architecture, TRAM spans 366–427 (ESYLDKTVEV…AGPLYGDIIK (62 aa)).

Belongs to the methylthiotransferase family. MiaB subfamily. In terms of assembly, monomer. It depends on [4Fe-4S] cluster as a cofactor.

It localises to the cytoplasm. It carries out the reaction N(6)-dimethylallyladenosine(37) in tRNA + (sulfur carrier)-SH + AH2 + 2 S-adenosyl-L-methionine = 2-methylsulfanyl-N(6)-dimethylallyladenosine(37) in tRNA + (sulfur carrier)-H + 5'-deoxyadenosine + L-methionine + A + S-adenosyl-L-homocysteine + 2 H(+). In terms of biological role, catalyzes the methylthiolation of N6-(dimethylallyl)adenosine (i(6)A), leading to the formation of 2-methylthio-N6-(dimethylallyl)adenosine (ms(2)i(6)A) at position 37 in tRNAs that read codons beginning with uridine. The polypeptide is tRNA-2-methylthio-N(6)-dimethylallyladenosine synthase (Thermosipho africanus (strain TCF52B)).